Consider the following 295-residue polypeptide: MPSGSDLSDTDTTLVVVTGVSGGGRSTVARALENVGYYVVDNLPQALMLDMAELAMKAGGAARRTAMVLDVRSRAFSTDLVGAIRELKERGFAPWVVFVDADDEVLIRRFESVRRSHPLQGEGRLADGIAVERGLLEGARDQADVIVDTSHLNVNQLRRRIEELFGAEDARRLRVTVVSFGFKYGVPPDADFVCDARFLPNPYWVPELREHTGQTEAVSSYVLGQEGAEAFVATYTDLINATTAGFEREGKRYLTVAVGCTGGKHRSVAIAEELAARLGRTVIAANTQHRDLGRE.

Residue 19 to 26 (GVSGGGRS) coordinates ATP. 70–73 (DVRS) is a GTP binding site.

Belongs to the RapZ-like family.

Displays ATPase and GTPase activities. This chain is Nucleotide-binding protein Sare_3328, found in Salinispora arenicola (strain CNS-205).